The sequence spans 493 residues: Proline--tRNA ligase (493 aa).

It belongs to the class-II aminoacyl-tRNA synthetase family. ProS type 3 subfamily. In terms of assembly, homodimer.

It localises to the cytoplasm. The enzyme catalyses tRNA(Pro) + L-proline + ATP = L-prolyl-tRNA(Pro) + AMP + diphosphate. Its function is as follows. Catalyzes the attachment of proline to tRNA(Pro) in a two-step reaction: proline is first activated by ATP to form Pro-AMP and then transferred to the acceptor end of tRNA(Pro). The polypeptide is Proline--tRNA ligase (Parabacteroides distasonis (strain ATCC 8503 / DSM 20701 / CIP 104284 / JCM 5825 / NCTC 11152)).